The chain runs to 276 residues: Orotidine 5'-phosphate decarboxylase (276 aa).

The Proton donor role is filled by Lys96.

This sequence belongs to the OMP decarboxylase family. Type 2 subfamily.

The enzyme catalyses orotidine 5'-phosphate + H(+) = UMP + CO2. It participates in pyrimidine metabolism; UMP biosynthesis via de novo pathway; UMP from orotate: step 2/2. The polypeptide is Orotidine 5'-phosphate decarboxylase (Porphyromonas gingivalis (strain ATCC BAA-308 / W83)).